The chain runs to 121 residues: Small ribosomal subunit protein uS13 (121 aa).

Residues 97–121 form a disordered region; it reads VRGQRTRTNARTRRGARKTVAGRKK. Over residues 100 to 121 the composition is skewed to basic residues; it reads QRTRTNARTRRGARKTVAGRKK.

Belongs to the universal ribosomal protein uS13 family. Part of the 30S ribosomal subunit. Forms a loose heterodimer with protein S19. Forms two bridges to the 50S subunit in the 70S ribosome.

Its function is as follows. Located at the top of the head of the 30S subunit, it contacts several helices of the 16S rRNA. In the 70S ribosome it contacts the 23S rRNA (bridge B1a) and protein L5 of the 50S subunit (bridge B1b), connecting the 2 subunits; these bridges are implicated in subunit movement. Contacts the tRNAs in the A and P-sites. The chain is Small ribosomal subunit protein uS13 from Prochlorococcus marinus (strain NATL2A).